The primary structure comprises 364 residues: MQERHTEQDYRALLIADTPIIDVRAPIEFEQGAMPAAINLPLMDNDERASVGTCYKQQGSDAALALGHKLVAGEIRQQRMYAWRAACLQNPQGILCCARGGQRSHIVQRWLHEAGIDYPLVEGGYKALRQTAIQATIELAQKPIVLIGGCTGSGKTLLVQQQPNGVDLEGLARHRGSAFGRTLQPQLSQASFENLLAAEMLKTDARQDLRLWVLEDESRMIGSNHLPECLRERMTQAAIAVVEDPFEIRLERLNEEYFLRMHHDFTHAYGDEQGWQEYCEYLHHGLSAIKRRLGLQRYNELAAQLDTALTTQLTTGSTDGHLAWLVPLLKEYYDPMYRYQLEKKAEKVVFRGEWAEVAVWVKAQ.

Residues 14 to 137 (LIADTPIIDV…LRQTAIQATI (124 aa)) enclose the Rhodanese domain. Cys97 acts as the S-selanylcysteine intermediate in catalysis.

Belongs to the SelU family. In terms of assembly, monomer.

The enzyme catalyses 5-methylaminomethyl-2-thiouridine(34) in tRNA + selenophosphate + (2E)-geranyl diphosphate + H2O + H(+) = 5-methylaminomethyl-2-selenouridine(34) in tRNA + (2E)-thiogeraniol + phosphate + diphosphate. The catalysed reaction is 5-methylaminomethyl-2-thiouridine(34) in tRNA + (2E)-geranyl diphosphate = 5-methylaminomethyl-S-(2E)-geranyl-thiouridine(34) in tRNA + diphosphate. It catalyses the reaction 5-methylaminomethyl-S-(2E)-geranyl-thiouridine(34) in tRNA + selenophosphate + H(+) = 5-methylaminomethyl-2-(Se-phospho)selenouridine(34) in tRNA + (2E)-thiogeraniol. It carries out the reaction 5-methylaminomethyl-2-(Se-phospho)selenouridine(34) in tRNA + H2O = 5-methylaminomethyl-2-selenouridine(34) in tRNA + phosphate. Involved in the post-transcriptional modification of the uridine at the wobble position (U34) of tRNA(Lys), tRNA(Glu) and tRNA(Gln). Catalyzes the conversion of 2-thiouridine (S2U-RNA) to 2-selenouridine (Se2U-RNA). Acts in a two-step process involving geranylation of 2-thiouridine (S2U) to S-geranyl-2-thiouridine (geS2U) and subsequent selenation of the latter derivative to 2-selenouridine (Se2U) in the tRNA chain. This Shigella flexneri protein is tRNA 2-selenouridine synthase.